The sequence spans 644 residues: Exoribonuclease 2 (644 aa).

One can recognise an RNB domain in the interval 189-516 (REDLTSLDFV…NHRLLKAVIK (328 aa)). Positions 561-643 (GTRFAAEIVD…ETRSIIARPV (83 aa)) constitute an S1 motif domain.

It belongs to the RNR ribonuclease family. RNase II subfamily.

The protein localises to the cytoplasm. The catalysed reaction is Exonucleolytic cleavage in the 3'- to 5'-direction to yield nucleoside 5'-phosphates.. Its function is as follows. Involved in mRNA degradation. Hydrolyzes single-stranded polyribonucleotides processively in the 3' to 5' direction. In Shigella flexneri, this protein is Exoribonuclease 2.